Reading from the N-terminus, the 249-residue chain is V-type proton ATPase subunit D 2 (249 aa).

Belongs to the V-ATPase D subunit family. As to quaternary structure, V-ATPase is a heteromultimeric enzyme made up of two complexes: the ATP-hydrolytic V1 complex and the proton translocation V0 complex. The V1 complex consists of three catalytic AB heterodimers that form a heterohexamer, three peripheral stalks each consisting of EG heterodimers, one central rotor including subunits D and F, and the regulatory subunits C and H. The proton translocation complex V0 consists of the proton transport subunit a, a ring of proteolipid subunits c9c'', rotary subunit d, subunits e and f, and the accessory subunits VhaAC45 and ATP6AP2.

Subunit of the V1 complex of vacuolar(H+)-ATPase (V-ATPase), a multisubunit enzyme composed of a peripheral complex (V1) that hydrolyzes ATP and a membrane integral complex (V0) that translocates protons. V-ATPase is responsible for acidifying and maintaining the pH of intracellular compartments and in some cell types, is targeted to the plasma membrane, where it is responsible for acidifying the extracellular environment. The polypeptide is V-type proton ATPase subunit D 2 (Vha36-3) (Drosophila melanogaster (Fruit fly)).